We begin with the raw amino-acid sequence, 98 residues long: ESAT-6-like protein EsxM (98 aa).

Belongs to the WXG100 family. CFP-10 subfamily.

It localises to the secreted. This is ESAT-6-like protein EsxM (esxM) from Mycobacterium bovis (strain ATCC BAA-935 / AF2122/97).